A 147-amino-acid polypeptide reads, in one-letter code: UPF0306 protein YpAngola_A4021 (147 aa).

This sequence belongs to the UPF0306 family.

In Yersinia pestis bv. Antiqua (strain Angola), this protein is UPF0306 protein YpAngola_A4021.